A 362-amino-acid polypeptide reads, in one-letter code: Ribosomal RNA large subunit methyltransferase M (362 aa).

Residues serine 194, 227–230 (CPGG), aspartate 246, aspartate 266, and aspartate 284 contribute to the S-adenosyl-L-methionine site. The active-site Proton acceptor is the lysine 313.

It belongs to the class I-like SAM-binding methyltransferase superfamily. RNA methyltransferase RlmE family. RlmM subfamily. As to quaternary structure, monomer.

The protein localises to the cytoplasm. It catalyses the reaction cytidine(2498) in 23S rRNA + S-adenosyl-L-methionine = 2'-O-methylcytidine(2498) in 23S rRNA + S-adenosyl-L-homocysteine + H(+). Its function is as follows. Catalyzes the 2'-O-methylation at nucleotide C2498 in 23S rRNA. The sequence is that of Ribosomal RNA large subunit methyltransferase M from Aggregatibacter aphrophilus (strain NJ8700) (Haemophilus aphrophilus).